The primary structure comprises 813 residues: LPS-assembly protein LptD (813 aa).

The first 22 residues, 1–22 (MRRALRLLPLPLSIAICLPAMA), serve as a signal peptide directing secretion.

It belongs to the LptD family. Component of the lipopolysaccharide transport and assembly complex. Interacts with LptE and LptA.

Its subcellular location is the cell outer membrane. Functionally, together with LptE, is involved in the assembly of lipopolysaccharide (LPS) at the surface of the outer membrane. The polypeptide is LPS-assembly protein LptD (Xanthomonas axonopodis pv. citri (strain 306)).